A 295-amino-acid chain; its full sequence is Manganese transport system membrane protein MntD (295 aa).

Transmembrane regions (helical) follow at residues 7–27 (IIAT…FLVL), 42–62 (LLGI…YMFI), 63–83 (GAAA…SKGV), 87–107 (AAIG…LSVY), 138–158 (IGPK…VLIS), 174–194 (ALAL…MLSL), 203–223 (VGAV…HLLT), 227–247 (LYML…GYFF), and 253–273 (VSIS…AFLF).

It belongs to the ABC-3 integral membrane protein family. In terms of assembly, the complex is probably composed of two ATP-binding proteins (MntB), two transmembrane proteins (MntC and MntD) and a solute-binding protein (MntA).

It is found in the cell membrane. Probably part of the ABC transporter complex MntABCD involved in manganese import. Probably responsible for the translocation of the substrate across the membrane. The sequence is that of Manganese transport system membrane protein MntD from Bacillus subtilis (strain 168).